The sequence spans 142 residues: Large ribosomal subunit protein mL42 (142 aa).

A mitochondrion-targeting transit peptide spans 1-32 (MAVAAVKWVMSKRTILKHLFPVQNGALYCVCH).

This sequence belongs to the mitochondrion-specific ribosomal protein mL42 family. Component of the mitochondrial large ribosomal subunit (mt-LSU). Mature mammalian 55S mitochondrial ribosomes consist of a small (28S) and a large (39S) subunit. The 28S small subunit contains a 12S ribosomal RNA (12S mt-rRNA) and 30 different proteins. The 39S large subunit contains a 16S rRNA (16S mt-rRNA), a copy of mitochondrial valine transfer RNA (mt-tRNA(Val)), which plays an integral structural role, and 52 different proteins.

It is found in the mitochondrion. The polypeptide is Large ribosomal subunit protein mL42 (MRPL42) (Homo sapiens (Human)).